A 183-amino-acid chain; its full sequence is Neuroblastoma suppressor of tumorigenicity 1 (183 aa).

A signal peptide spans 1 to 19 (MVMCVRAVLVCVLLELSRA). 5 disulfide bridges follow: C38/C88, C52/C102, C62/C121, C66/C123, and C85/C126. One can recognise a CTCK domain in the interval 38–127 (CEAKNITQIV…ILHCSCQSCS (90 aa)). The tract at residues 145–170 (AQDLPSLPDATHTHPQHAHMQADQRD) is disordered.

Belongs to the DAN family.

The protein localises to the secreted. In terms of biological role, may act as a tumor suppressor. This Danio rerio (Zebrafish) protein is Neuroblastoma suppressor of tumorigenicity 1 (nbl1).